Reading from the N-terminus, the 730-residue chain is Hemolytic phospholipase C (730 aa).

The segment at residues 1–38 is a signal peptide (tat-type signal); it reads MTENWKFRRRTFLKHGAQAATLAGLSGLFPETLRRALA.

It belongs to the bacterial phospholipase C family. Predicted to be exported by the Tat system. The position of the signal peptide cleavage has not been experimentally proven.

It carries out the reaction a 1,2-diacyl-sn-glycero-3-phosphocholine + H2O = phosphocholine + a 1,2-diacyl-sn-glycerol + H(+). In terms of biological role, hydrolyzes sphingomyelin in addition to phosphatidylcholine. The polypeptide is Hemolytic phospholipase C (plcH) (Pseudomonas aeruginosa (strain ATCC 15692 / DSM 22644 / CIP 104116 / JCM 14847 / LMG 12228 / 1C / PRS 101 / PAO1)).